A 226-amino-acid polypeptide reads, in one-letter code: tRNA (guanine-N(7)-)-methyltransferase (226 aa).

Positions Met-1–Val-22 are disordered. Glu-59, Glu-84, Asp-111, and Asp-133 together coordinate S-adenosyl-L-methionine. Residue Asp-133 is part of the active site. Residue Lys-137 participates in substrate binding. The tract at residues Arg-139–Arg-144 is interaction with RNA. Residues Asp-169 and Thr-206–Glu-209 each bind substrate.

The protein belongs to the class I-like SAM-binding methyltransferase superfamily. TrmB family.

The catalysed reaction is guanosine(46) in tRNA + S-adenosyl-L-methionine = N(7)-methylguanosine(46) in tRNA + S-adenosyl-L-homocysteine. Its pathway is tRNA modification; N(7)-methylguanine-tRNA biosynthesis. Catalyzes the formation of N(7)-methylguanine at position 46 (m7G46) in tRNA. In Caulobacter vibrioides (strain ATCC 19089 / CIP 103742 / CB 15) (Caulobacter crescentus), this protein is tRNA (guanine-N(7)-)-methyltransferase.